Here is a 452-residue protein sequence, read N- to C-terminus: Cell division protein FtsZ (452 aa).

GTP-binding positions include 24 to 28 (GAGSN), 111 to 113 (GTG), Glu-142, Arg-146, and Asp-190.

This sequence belongs to the FtsZ family. In terms of assembly, homodimer. Polymerizes to form a dynamic ring structure in a strictly GTP-dependent manner. Interacts directly with several other division proteins.

It localises to the cytoplasm. In terms of biological role, essential cell division protein that forms a contractile ring structure (Z ring) at the future cell division site. The regulation of the ring assembly controls the timing and the location of cell division. One of the functions of the FtsZ ring is to recruit other cell division proteins to the septum to produce a new cell wall between the dividing cells. Binds GTP and shows GTPase activity. In Rickettsia felis (strain ATCC VR-1525 / URRWXCal2) (Rickettsia azadi), this protein is Cell division protein FtsZ.